The following is an 87-amino-acid chain: Small ribosomal subunit protein bS18 (87 aa).

It belongs to the bacterial ribosomal protein bS18 family. In terms of assembly, part of the 30S ribosomal subunit. Forms a tight heterodimer with protein bS6.

In terms of biological role, binds as a heterodimer with protein bS6 to the central domain of the 16S rRNA, where it helps stabilize the platform of the 30S subunit. In Oleidesulfovibrio alaskensis (strain ATCC BAA-1058 / DSM 17464 / G20) (Desulfovibrio alaskensis), this protein is Small ribosomal subunit protein bS18.